A 194-amino-acid polypeptide reads, in one-letter code: Peptidyl-tRNA hydrolase (194 aa).

Tyr16 lines the tRNA pocket. His21 serves as the catalytic Proton acceptor. 3 residues coordinate tRNA: Phe67, Asn69, and Asn115.

This sequence belongs to the PTH family. Monomer.

It is found in the cytoplasm. The catalysed reaction is an N-acyl-L-alpha-aminoacyl-tRNA + H2O = an N-acyl-L-amino acid + a tRNA + H(+). Hydrolyzes ribosome-free peptidyl-tRNAs (with 1 or more amino acids incorporated), which drop off the ribosome during protein synthesis, or as a result of ribosome stalling. Its function is as follows. Catalyzes the release of premature peptidyl moieties from peptidyl-tRNA molecules trapped in stalled 50S ribosomal subunits, and thus maintains levels of free tRNAs and 50S ribosomes. In Salmonella heidelberg (strain SL476), this protein is Peptidyl-tRNA hydrolase.